The following is a 290-amino-acid chain: Protoheme IX farnesyltransferase 1 (290 aa).

8 consecutive transmembrane segments (helical) span residues 8–28 (ITKP…FFLA), 36–56 (FLLL…GCVV), 85–105 (AAFV…FQVV), 108–128 (LSAV…TMWY), 131–151 (NSVY…LVGY), 152–172 (LAVT…FCLW), 211–231 (AYVV…EAGY), and 269–289 (LLVV…LPFI).

This sequence belongs to the UbiA prenyltransferase family. Protoheme IX farnesyltransferase subfamily.

The protein resides in the cell inner membrane. The catalysed reaction is heme b + (2E,6E)-farnesyl diphosphate + H2O = Fe(II)-heme o + diphosphate. Its pathway is porphyrin-containing compound metabolism; heme O biosynthesis; heme O from protoheme: step 1/1. In terms of biological role, converts heme B (protoheme IX) to heme O by substitution of the vinyl group on carbon 2 of heme B porphyrin ring with a hydroxyethyl farnesyl side group. The polypeptide is Protoheme IX farnesyltransferase 1 (Vibrio campbellii (strain ATCC BAA-1116)).